The primary structure comprises 453 residues: GTPase Der (453 aa).

2 consecutive EngA-type G domains span residues 4–169 (PIVA…PPAD) and 178–353 (IGVA…EQHR). GTP is bound by residues 10-17 (GRPNVGKS), 57-61 (DTGGL), 120-123 (NKCE), 184-191 (GRPNVGKS), 231-235 (DTAGI), and 296-299 (NKWD). One can recognise a KH-like domain in the interval 354–439 (RRVGTSVINE…PIRLFWRGKK (86 aa)).

This sequence belongs to the TRAFAC class TrmE-Era-EngA-EngB-Septin-like GTPase superfamily. EngA (Der) GTPase family. Associates with the 50S ribosomal subunit.

GTPase that plays an essential role in the late steps of ribosome biogenesis. The chain is GTPase Der from Synechococcus sp. (strain ATCC 27144 / PCC 6301 / SAUG 1402/1) (Anacystis nidulans).